The primary structure comprises 59 residues: Toxin TxpA (59 aa).

Residues L7–L27 traverse the membrane as a helical segment.

It is found in the cell membrane. Its function is as follows. Toxic component of a type I toxin-antitoxin (TA) system. Overexpression of txpA causes cell lysis; the TxpA protein has been suggested to act on the cell membrane or might possibly block cell wall synthesis. Overexpression in E.coli is not toxic. This Bacillus subtilis (strain 168) protein is Toxin TxpA.